A 438-amino-acid chain; its full sequence is SPbeta prophage-derived uncharacterized protein YopA (438 aa).

A helical transmembrane segment spans residues Leu-391–Tyr-411.

Its subcellular location is the cell membrane. The protein is SPbeta prophage-derived uncharacterized protein YopA (yopA) of Bacillus subtilis (strain 168).